Here is a 523-residue protein sequence, read N- to C-terminus: 2-isopropylmalate synthase (523 aa).

The Pyruvate carboxyltransferase domain occupies 5–267 (VIIFDTTLRD…HTRINHQEIW (263 aa)). The Mn(2+) site is built by D14, H202, H204, and N238. The regulatory domain stretch occupies residues 392–523 (RLDYFSVQSG…QNKENNKETV (132 aa)).

This sequence belongs to the alpha-IPM synthase/homocitrate synthase family. LeuA type 1 subfamily. In terms of assembly, homodimer. Requires Mn(2+) as cofactor.

The protein localises to the cytoplasm. It catalyses the reaction 3-methyl-2-oxobutanoate + acetyl-CoA + H2O = (2S)-2-isopropylmalate + CoA + H(+). The protein operates within amino-acid biosynthesis; L-leucine biosynthesis; L-leucine from 3-methyl-2-oxobutanoate: step 1/4. Functionally, catalyzes the condensation of the acetyl group of acetyl-CoA with 3-methyl-2-oxobutanoate (2-ketoisovalerate) to form 3-carboxy-3-hydroxy-4-methylpentanoate (2-isopropylmalate). The protein is 2-isopropylmalate synthase of Citrobacter koseri (strain ATCC BAA-895 / CDC 4225-83 / SGSC4696).